The primary structure comprises 94 residues: Ubiquitin-like protein ATG12B (94 aa).

Ala-2 is modified (N-acetylalanine). Gly-94 is covalently cross-linked (Glycyl lysine isopeptide (Gly-Lys) (interchain with K-128 in ATG5)).

The protein belongs to the ATG12 family. Ubiquitous.

The protein localises to the cytoplasm. Functionally, ubiquitin-like protein involved in cytoplasm to vacuole transport (Cvt) and autophagy vesicles formation. Conjugation with ATG5 through a ubiquitin-like conjugating system involving also ATG7 as an E1-like activating enzyme and ATG10 as an E2-like conjugating enzyme, is essential for its function. ATG12/ATG5 conjugate has an essential role in plant nutrient recycling. The polypeptide is Ubiquitin-like protein ATG12B (ATG12B) (Arabidopsis thaliana (Mouse-ear cress)).